Here is a 249-residue protein sequence, read N- to C-terminus: Probable aquaporin TIP-type (249 aa).

A run of 2 helical transmembrane segments spans residues 22-42 (AGLAEFISTFIFVFAGSGSGI) and 56-76 (AGLISASIAHAFALFVAVSVG). Residues 85 to 87 (NPA) carry the NPA 1 motif. Transmembrane regions (helical) follow at residues 103–123 (IVYIIAQLLGSIVCSALLVFV), 137–157 (VGVGPALVLEIVMTFGLVYTV), and 169–189 (IGIIAPIAIGFIVGANILVGG). The NPA 2 signature appears at 197 to 199 (NPA). Residues 217–237 (YWAGPLIGGGIAGLVYEVLFI) form a helical membrane-spanning segment.

The protein belongs to the MIP/aquaporin (TC 1.A.8) family. TIP (TC 1.A.8.10) subfamily. As to expression, expression is highest in root tips, with slightly lower levels of hybridizing mRNA in stems, and whole roots, and much lower levels in nodules and leaves.

Its subcellular location is the membrane. In terms of biological role, aquaporins facilitate the transport of water and small neutral solutes across cell membranes. The protein is Probable aquaporin TIP-type (MCP1) of Medicago sativa (Alfalfa).